Reading from the N-terminus, the 75-residue chain is Cytochrome c oxidase assembly factor 5 (75 aa).

The CHCH domain maps to Gln28–Arg66. The Cx10C motif motif lies at Cys31–Cys42. Disulfide bonds link Cys31–Cys58 and Cys42–Cys48. Residues Cys48–Cys58 carry the Cx9C motif motif.

This sequence belongs to the PET191 family.

Its function is as follows. Involved in an early step of the mitochondrial complex IV assembly process. This Xenopus tropicalis (Western clawed frog) protein is Cytochrome c oxidase assembly factor 5 (coa5).